A 561-amino-acid chain; its full sequence is 2-methylisocitrate lyase, mitochondrial (561 aa).

Positions 154-177 (KAQSMHDRKQWDTRRKMSPDERSK) are disordered. A compositionally biased stretch (basic and acidic residues) spans 157–177 (SMHDRKQWDTRRKMSPDERSK). Residue Cys228 is part of the active site.

Belongs to the isocitrate lyase/PEP mutase superfamily. Isocitrate lyase family. The cofactor is Mg(2+).

It localises to the mitochondrion matrix. It carries out the reaction (2S,3R)-3-hydroxybutane-1,2,3-tricarboxylate = pyruvate + succinate. It functions in the pathway organic acid metabolism; propanoate degradation. Its function is as follows. Component of the methylcitrate cycle that catalyzes the formation of pyruvate and succinate from 2-methylisocitrate during the metabolism of endogenous propionyl-CoA. Plays an important role for growth and development, but also in antagonism, root colonization and induction of defense responses in plants. In Hypocrea atroviridis (strain ATCC 20476 / IMI 206040) (Trichoderma atroviride), this protein is 2-methylisocitrate lyase, mitochondrial.